The sequence spans 227 residues: PKHD-type hydroxylase Bphyt_7102 (227 aa).

The region spanning 80-179 is the Fe2OG dioxygenase domain; the sequence is QVYPPLFNRY…RIASFFWVQS (100 aa). The Fe cation site is built by histidine 98, aspartate 100, and histidine 160. Arginine 170 provides a ligand contact to 2-oxoglutarate.

Fe(2+) is required as a cofactor. L-ascorbate serves as cofactor.

The polypeptide is PKHD-type hydroxylase Bphyt_7102 (Paraburkholderia phytofirmans (strain DSM 17436 / LMG 22146 / PsJN) (Burkholderia phytofirmans)).